Reading from the N-terminus, the 218-residue chain is UPF0319 protein PM0395 (218 aa).

An N-terminal signal peptide occupies residues 1-21 (MKFRFAALASVALLTSTVSVA).

Belongs to the UPF0319 family.

The polypeptide is UPF0319 protein PM0395 (Pasteurella multocida (strain Pm70)).